We begin with the raw amino-acid sequence, 123 residues long: Small ribosomal subunit protein uS12 (123 aa).

A 3-methylthioaspartic acid modification is found at aspartate 89.

Belongs to the universal ribosomal protein uS12 family. In terms of assembly, part of the 30S ribosomal subunit. Contacts proteins S8 and S17. May interact with IF1 in the 30S initiation complex.

With S4 and S5 plays an important role in translational accuracy. In terms of biological role, interacts with and stabilizes bases of the 16S rRNA that are involved in tRNA selection in the A site and with the mRNA backbone. Located at the interface of the 30S and 50S subunits, it traverses the body of the 30S subunit contacting proteins on the other side and probably holding the rRNA structure together. The combined cluster of proteins S8, S12 and S17 appears to hold together the shoulder and platform of the 30S subunit. This is Small ribosomal subunit protein uS12 from Pelagibacter ubique (strain HTCC1062).